The chain runs to 339 residues: DNA-directed RNA polymerase subunit alpha (339 aa).

An alpha N-terminal domain (alpha-NTD) region spans residues 1-235 (MVIQKNWQEL…DQLQIFVNFE (235 aa)). Positions 251–339 (FNPALLKKVD…DLAKRFEEHY (89 aa)) are alpha C-terminal domain (alpha-CTD).

Belongs to the RNA polymerase alpha chain family. As to quaternary structure, homodimer. The RNAP catalytic core consists of 2 alpha, 1 beta, 1 beta' and 1 omega subunit. When a sigma factor is associated with the core the holoenzyme is formed, which can initiate transcription.

It catalyses the reaction RNA(n) + a ribonucleoside 5'-triphosphate = RNA(n+1) + diphosphate. Its function is as follows. DNA-dependent RNA polymerase catalyzes the transcription of DNA into RNA using the four ribonucleoside triphosphates as substrates. The sequence is that of DNA-directed RNA polymerase subunit alpha from Methylobacterium nodulans (strain LMG 21967 / CNCM I-2342 / ORS 2060).